The chain runs to 289 residues: Formamidopyrimidine-DNA glycosylase (289 aa).

P2 acts as the Schiff-base intermediate with DNA in catalysis. E3 functions as the Proton donor in the catalytic mechanism. The active-site Proton donor; for beta-elimination activity is the K61. DNA contacts are provided by H96, R115, and K161. An FPG-type zinc finger spans residues 247–281; sequence SAYGQENLPCPRCGAPIKREKFMNRSSFSCPRCQP. The active-site Proton donor; for delta-elimination activity is the R271.

It belongs to the FPG family. As to quaternary structure, monomer. Requires Zn(2+) as cofactor.

It carries out the reaction Hydrolysis of DNA containing ring-opened 7-methylguanine residues, releasing 2,6-diamino-4-hydroxy-5-(N-methyl)formamidopyrimidine.. The catalysed reaction is 2'-deoxyribonucleotide-(2'-deoxyribose 5'-phosphate)-2'-deoxyribonucleotide-DNA = a 3'-end 2'-deoxyribonucleotide-(2,3-dehydro-2,3-deoxyribose 5'-phosphate)-DNA + a 5'-end 5'-phospho-2'-deoxyribonucleoside-DNA + H(+). In terms of biological role, involved in base excision repair of DNA damaged by oxidation or by mutagenic agents. Acts as a DNA glycosylase that recognizes and removes damaged bases. Has a preference for oxidized purines, such as 7,8-dihydro-8-oxoguanine (8-oxoG). Has AP (apurinic/apyrimidinic) lyase activity and introduces nicks in the DNA strand. Cleaves the DNA backbone by beta-delta elimination to generate a single-strand break at the site of the removed base with both 3'- and 5'-phosphates. The sequence is that of Formamidopyrimidine-DNA glycosylase from Rhodococcus erythropolis (strain PR4 / NBRC 100887).